Here is a 309-residue protein sequence, read N- to C-terminus: Porphobilinogen deaminase (309 aa).

Position 241 is an S-(dipyrrolylmethanemethyl)cysteine (C241).

This sequence belongs to the HMBS family. In terms of assembly, monomer. Dipyrromethane serves as cofactor.

It carries out the reaction 4 porphobilinogen + H2O = hydroxymethylbilane + 4 NH4(+). Its pathway is porphyrin-containing compound metabolism; protoporphyrin-IX biosynthesis; coproporphyrinogen-III from 5-aminolevulinate: step 2/4. Functionally, tetrapolymerization of the monopyrrole PBG into the hydroxymethylbilane pre-uroporphyrinogen in several discrete steps. This Bacillus cereus (strain AH187) protein is Porphobilinogen deaminase.